The sequence spans 268 residues: Undecaprenyl-diphosphatase (268 aa).

7 helical membrane-spanning segments follow: residues 47–67 (FAILIQLGAILAIVALYFFKL), 83–103 (FIIGVLIAFLPAVIIGLIAGK), 109–129 (LFDPWVVCFSLIVGGAILLWV), 144–164 (YPLMMYLWIGVAQCLAMIPGV), 184–204 (AAEFSFFLAIPTMVGAFVYDF), 218–238 (LIAIGFVVSFITAMIVVKAFL), and 246–266 (FVLFAWWRVIVGTLGLIALAL).

Belongs to the UppP family.

It is found in the cell inner membrane. It catalyses the reaction di-trans,octa-cis-undecaprenyl diphosphate + H2O = di-trans,octa-cis-undecaprenyl phosphate + phosphate + H(+). Catalyzes the dephosphorylation of undecaprenyl diphosphate (UPP). Confers resistance to bacitracin. This chain is Undecaprenyl-diphosphatase, found in Bradyrhizobium sp. (strain ORS 278).